The primary structure comprises 377 residues: G-protein coupled receptor 54 (377 aa).

Residues 1-49 (MYSSEELWNSTEQVWINGSGTNFSLGRHEDDEEEEGDKHPFFTDAWLVP) lie on the Extracellular side of the membrane. Asn-9, Asn-17, and Asn-22 each carry an N-linked (GlcNAc...) asparagine glycan. The helical transmembrane segment at 50–70 (LFFSLIMLVGLVGNSLVIYVI) threads the bilayer. Residues 71–91 (SKHRQMRTATNFYIANLAATD) lie on the Cytoplasmic side of the membrane. A helical transmembrane segment spans residues 92-112 (IIFLVCCVPFTATLYPLPGWI). Topologically, residues 113 to 119 (FGNFMCK) are extracellular. Cys-118 and Cys-198 are disulfide-bonded. A helical membrane pass occupies residues 120–140 (FVAFLQQVTVQATCITLTAMS). Topologically, residues 141–160 (GDRCYVTVYPLKSLRHRTPK) are cytoplasmic. The chain crosses the membrane as a helical span at residues 161–181 (VAMIVSICIWIGSFVLSTPIL). Over 182–209 (MYQRIEEGYWYGPRQYCMERFPSKTHER) the chain is Extracellular. The chain crosses the membrane as a helical span at residues 210–230 (AFILYQFIAAYLLPVLTISFC). Residues 231–269 (YTLMVKRVGQPTVEPVDNNYQVNLLSERTISIRSKVSKM) lie on the Cytoplasmic side of the membrane. A helical membrane pass occupies residues 270–290 (VVVIVLLFAICWGPIQIFVLF). Residues 291–305 (QSFYPNYQPNYATYK) lie on the Extracellular side of the membrane. The helical transmembrane segment at 306–328 (IKTWANCMSYANSSVNPIVYGFM) threads the bilayer. Over 329-377 (GASFQKSFRKTFPFLFKHKVRDSSMASRTANAEIKFVAAEEGNNNNAVN) the chain is Cytoplasmic.

Belongs to the G-protein coupled receptor 1 family. Expressed in a significantly high percentage (45-60%) of mature GnRH1, GnRH2, and GnRH3 neurons and in immature GnRH3 neurons, which had migrated to the vicinity of their final locations in the brain. Only 5% of immature GnRH1 and GnRH2 neurons have receptor transcripts.

It localises to the cell membrane. Functionally, receptor speculated to be essential for sexual development. May regulate gonadotropin-releasing hormone (GnRH) secretion. The receptor expression could be a 'stop signal' for GnRH1, GnRH2, and GnRH3 neuronal migration, leading to suppression of cell growth and modulation of GnRH secretion, which is important for normal sexual development. This chain is G-protein coupled receptor 54 (gpr54), found in Oreochromis niloticus (Nile tilapia).